The primary structure comprises 88 residues: Small ribosomal subunit protein bS20 (88 aa).

Over residues 1–11 (MANIKSSEKDI) the composition is skewed to basic and acidic residues. Disordered stretches follow at residues 1-31 (MANI…LRTQ) and 69-88 (SKNA…SSAA).

This sequence belongs to the bacterial ribosomal protein bS20 family.

Binds directly to 16S ribosomal RNA. This chain is Small ribosomal subunit protein bS20, found in Leptospira interrogans serogroup Icterohaemorrhagiae serovar copenhageni (strain Fiocruz L1-130).